A 487-amino-acid chain; its full sequence is Serine carboxypeptidase-like 37 (487 aa).

A signal peptide spans 1 to 28 (MVKQQDWSVTTCVLLFLFLASQIHCRSG). A glycan (N-linked (GlcNAc...) asparagine) is linked at N105. 3 cysteine pairs are disulfide-bonded: C120-C368, C280-C291, and C315-C336. S215 is a catalytic residue. N-linked (GlcNAc...) asparagine glycans are attached at residues N317, N357, and N375. Residue D407 is part of the active site. Residues N423 and N449 are each glycosylated (N-linked (GlcNAc...) asparagine). H460 is an active-site residue.

Belongs to the peptidase S10 family. In terms of tissue distribution, expressed in seedlings, roots, leaves, stems, flowers and siliques.

The protein resides in the secreted. In terms of biological role, probable carboxypeptidase. The chain is Serine carboxypeptidase-like 37 (SCPL37) from Arabidopsis thaliana (Mouse-ear cress).